Reading from the N-terminus, the 488-residue chain is UDP-N-acetylmuramate--L-alanine ligase (488 aa).

127–133 is a binding site for ATP; sequence GTHGKTT.

This sequence belongs to the MurCDEF family.

Its subcellular location is the cytoplasm. The catalysed reaction is UDP-N-acetyl-alpha-D-muramate + L-alanine + ATP = UDP-N-acetyl-alpha-D-muramoyl-L-alanine + ADP + phosphate + H(+). Its pathway is cell wall biogenesis; peptidoglycan biosynthesis. Cell wall formation. This Shewanella sp. (strain ANA-3) protein is UDP-N-acetylmuramate--L-alanine ligase.